The following is a 475-amino-acid chain: Glycogen synthase (475 aa).

Lysine 15 contacts ADP-alpha-D-glucose.

It belongs to the glycosyltransferase 1 family. Bacterial/plant glycogen synthase subfamily.

It catalyses the reaction [(1-&gt;4)-alpha-D-glucosyl](n) + ADP-alpha-D-glucose = [(1-&gt;4)-alpha-D-glucosyl](n+1) + ADP + H(+). It participates in glycan biosynthesis; glycogen biosynthesis. Synthesizes alpha-1,4-glucan chains using ADP-glucose. The protein is Glycogen synthase of Chlamydia felis (strain Fe/C-56) (Chlamydophila felis).